A 360-amino-acid chain; its full sequence is Peptide chain release factor 1 (360 aa).

Gln-237 carries the N5-methylglutamine modification.

The protein belongs to the prokaryotic/mitochondrial release factor family. Post-translationally, methylated by PrmC. Methylation increases the termination efficiency of RF1.

The protein resides in the cytoplasm. In terms of biological role, peptide chain release factor 1 directs the termination of translation in response to the peptide chain termination codons UAG and UAA. This Pseudomonas fluorescens (strain SBW25) protein is Peptide chain release factor 1.